A 142-amino-acid chain; its full sequence is Probable signal recognition particle 19 kDa protein (142 aa).

Residues 115 to 142 (KTRQPGYTAPSVASSSAAAAGKKNKKKK) form a disordered region. A compositionally biased stretch (low complexity) spans 123 to 135 (APSVASSSAAAAG).

The protein belongs to the SRP19 family. In terms of assembly, component of a signal recognition particle complex that consists of a 7SL RNA molecule of 300 nucleotides and six protein subunits: srpa-72, srpa-68, SRP54, F37F2.2/SRP19, F25G6.8/SRP14 and ZK512.4/SRP9.

It localises to the cytoplasm. The protein localises to the nucleus. It is found in the nucleolus. Functionally, component of the signal recognition particle (SRP) complex, a ribonucleoprotein complex that mediates the cotranslational targeting of secretory and membrane proteins to the endoplasmic reticulum (ER). Binds directly to 7SL RNA. Mediates binding of SRP54 to the SRP complex. The polypeptide is Probable signal recognition particle 19 kDa protein (Caenorhabditis elegans).